Reading from the N-terminus, the 206-residue chain is Large ribosomal subunit protein uL4 (206 aa).

Residues 43 to 78 (ARSGNRKQKDREEVHHTTKKPWRQKGTGRARAGMSS) form a disordered region. Residues 49–58 (KQKDREEVHH) show a composition bias toward basic and acidic residues. The segment covering 59–70 (TTKKPWRQKGTG) has biased composition (basic residues).

The protein belongs to the universal ribosomal protein uL4 family. In terms of assembly, part of the 50S ribosomal subunit.

One of the primary rRNA binding proteins, this protein initially binds near the 5'-end of the 23S rRNA. It is important during the early stages of 50S assembly. It makes multiple contacts with different domains of the 23S rRNA in the assembled 50S subunit and ribosome. Its function is as follows. Forms part of the polypeptide exit tunnel. This chain is Large ribosomal subunit protein uL4, found in Janthinobacterium sp. (strain Marseille) (Minibacterium massiliensis).